Here is a 93-residue protein sequence, read N- to C-terminus: Translation initiation factor IF-1 (93 aa).

One can recognise an S1-like domain in the interval Met-1–Lys-72. The tract at residues Phe-69 to Arg-93 is disordered.

It belongs to the IF-1 family. In terms of assembly, component of the 30S ribosomal translation pre-initiation complex which assembles on the 30S ribosome in the order IF-2 and IF-3, IF-1 and N-formylmethionyl-tRNA(fMet); mRNA recruitment can occur at any time during PIC assembly.

The protein localises to the cytoplasm. Its function is as follows. One of the essential components for the initiation of protein synthesis. Stabilizes the binding of IF-2 and IF-3 on the 30S subunit to which N-formylmethionyl-tRNA(fMet) subsequently binds. Helps modulate mRNA selection, yielding the 30S pre-initiation complex (PIC). Upon addition of the 50S ribosomal subunit IF-1, IF-2 and IF-3 are released leaving the mature 70S translation initiation complex. This chain is Translation initiation factor IF-1, found in Nitrobacter hamburgensis (strain DSM 10229 / NCIMB 13809 / X14).